A 369-amino-acid polypeptide reads, in one-letter code: Dehydrogenase pigH (369 aa).

The region spanning 13-367 (KAPLLEVKAA…QGVSAKKIVV (355 aa)) is the Enoyl reductase (ER) domain. Position 44 to 49 (44 to 49 (IDWLIQ)) interacts with NADP(+). Asn79 and Asn101 each carry an N-linked (GlcNAc...) asparagine glycan. Residues 197-200 (SRKN) and Tyr215 contribute to the NADP(+) site. The chain crosses the membrane as a helical span at residues 280 to 300 (TIIFFVSWIISFKFKGLLKGI). An NADP(+)-binding site is contributed by 360–361 (VS).

Belongs to the zinc-containing alcohol dehydrogenase family.

Its subcellular location is the membrane. The protein operates within secondary metabolite biosynthesis. Functionally, dehydrogenase; part of the gene cluster that mediates the biosynthesis of azaphilone pigments (MonAzPs), a complex mixture of compounds with a common azaphilone skeleton very widely used as food colorants. Within the pathway, pigH might be involved in the late steps of yellow pigments monascin and ankaflavin biosynthesis. The first step of the pathway is performed by the nrPKS pigA that forms the hexaketide precursor from successive condensations of five malonyl-CoA units, with a simple acetyl-CoA starter unit. The role of esterase pigG is not clear, but it may play at most a supplementary role in the formation of the benzaldehyde produced by the pigA nrPKS. This very reactive benzaldehyde is intercepted by the pigC ketoreductase that to provide the first stable enzyme-free MonAzPs intermediate, 6-(4-hydroxy-2-oxopentyl)-3-methyl-2,4-dioxocyclohexane carbaldehyde, also known as M7PKS-1. The FAD-dependent monooxygenase pigN hydroxylates M7PKS-1 at C-4, which triggers the formation of the pyran ring. PigJ, pigK and pigD are involved in the acetylation of the pyran ring. PigJ and pigK form the two subunits of a dedicated fungal FAS that produces the side chain fatty acyl moiety of MonAzPs and pigD transfers the fatty acyl chain to the C-4 alcohol. PigM and pigO are involved in the elimination of the omega-1 alcohol. PigM acts as an O-acetyltransferase that synthesizes the putative O-11 acetyl intermediate whereas pigO eliminates acetic acid to yield an intermediate with a C10(11) double bond. The dehydration of the C-11 alcohol followed by the reduction of the C6(7) double bond by the NAD(P)H-dependent oxidoreductase pigE increases the electrophilicity of the C-5 ketone of the resulting acyl benzopyran. This in turn sets up the C-5 ketone for an intramolecular Knoevenagel aldol condensation with the C-20 enol of the side chain. This condensation affords the characteristic linear tricyclic carbon skeletons of the yellow pigments that serve as the common precursors for the classical yellow pigments monascin and ankaflavin, orange pigments rubopunctatin and monascorubrin, and red pigments ribropunctamine and monascorubramine. The FAD-dependent oxidoreductase pigF is especially invoved in the biosynthesis of orange and red pigments via desaturation of C6(7). In Monascus ruber (Mold), this protein is Dehydrogenase pigH.